We begin with the raw amino-acid sequence, 372 residues long: Anhydro-N-acetylmuramic acid kinase (372 aa).

Position 14-21 (14-21 (GTSLDGVD)) interacts with ATP.

This sequence belongs to the anhydro-N-acetylmuramic acid kinase family.

The enzyme catalyses 1,6-anhydro-N-acetyl-beta-muramate + ATP + H2O = N-acetyl-D-muramate 6-phosphate + ADP + H(+). The protein operates within amino-sugar metabolism; 1,6-anhydro-N-acetylmuramate degradation. Its pathway is cell wall biogenesis; peptidoglycan recycling. Catalyzes the specific phosphorylation of 1,6-anhydro-N-acetylmuramic acid (anhMurNAc) with the simultaneous cleavage of the 1,6-anhydro ring, generating MurNAc-6-P. Is required for the utilization of anhMurNAc either imported from the medium or derived from its own cell wall murein, and thus plays a role in cell wall recycling. The polypeptide is Anhydro-N-acetylmuramic acid kinase (Photorhabdus laumondii subsp. laumondii (strain DSM 15139 / CIP 105565 / TT01) (Photorhabdus luminescens subsp. laumondii)).